A 458-amino-acid polypeptide reads, in one-letter code: UDP-N-acetylmuramoylalanine--D-glutamate ligase (458 aa).

124–130 provides a ligand contact to ATP; sequence GSDGKTT.

Belongs to the MurCDEF family.

It is found in the cytoplasm. It carries out the reaction UDP-N-acetyl-alpha-D-muramoyl-L-alanine + D-glutamate + ATP = UDP-N-acetyl-alpha-D-muramoyl-L-alanyl-D-glutamate + ADP + phosphate + H(+). It functions in the pathway cell wall biogenesis; peptidoglycan biosynthesis. Cell wall formation. Catalyzes the addition of glutamate to the nucleotide precursor UDP-N-acetylmuramoyl-L-alanine (UMA). The polypeptide is UDP-N-acetylmuramoylalanine--D-glutamate ligase (Clostridium beijerinckii (strain ATCC 51743 / NCIMB 8052) (Clostridium acetobutylicum)).